A 406-amino-acid chain; its full sequence is Glycosyltransferase GlyE (406 aa).

The segment at 3-265 (NTKRAVVFAG…SVILNEWFSK (263 aa)) is GT8 domain. Residues 11-16 (AGDYAY) and 106-107 (DS) contribute to the UDP site. Residues Asp106, Asp108, and His227 each contribute to the Mn(2+) site. A UDP-binding site is contributed by 227-233 (HYISQDK).

It in the N-terminal section; belongs to the glycosyltransferase 8 family. Mn(2+) is required as a cofactor.

The protein operates within protein modification; protein glycosylation. Functionally, involved in the polymorphic O-glycosylation of the serine-rich repeat protein PsrP. Catalyzes the third step in glycosylation of PsrP in this bacteria. Transfers galactose from UDP-galactose to the terminal glucose moiety of already-glycosylated PsrP (using the short substrate PsrP-GlcNAc-Glc). Has a very marked preference for PsrP substrate that has already been modified by GlcNAc and glucose. Has hydrolytic activity against UDP-galactose but none against UDP-glucose. In terms of biological role, also catalyzes the fourth step in glycosylation of PsrP in this bacteria. Can transfer the sugar from UDP-galactose to the terminal sugar moiety of PsrP-GlcNAc-Glc-Glc and of PsrP-GlcNAc-Glc-Gal. This is Glycosyltransferase GlyE from Streptococcus pneumoniae serotype 4 (strain ATCC BAA-334 / TIGR4).